The chain runs to 429 residues: Ribosomal RNA small subunit methyltransferase B (429 aa).

S-adenosyl-L-methionine is bound by residues 254 to 260 (CAAPGGK), Asp277, Asp303, and Asp322. Cys375 functions as the Nucleophile in the catalytic mechanism.

The protein belongs to the class I-like SAM-binding methyltransferase superfamily. RsmB/NOP family.

Its subcellular location is the cytoplasm. The enzyme catalyses cytidine(967) in 16S rRNA + S-adenosyl-L-methionine = 5-methylcytidine(967) in 16S rRNA + S-adenosyl-L-homocysteine + H(+). Its function is as follows. Specifically methylates the cytosine at position 967 (m5C967) of 16S rRNA. In Pectobacterium carotovorum subsp. carotovorum (strain PC1), this protein is Ribosomal RNA small subunit methyltransferase B.